Here is a 714-residue protein sequence, read N- to C-terminus: Phenylalanine 2-monooxygenase precursor (714 aa).

A propeptide spans 1–15 (MGVTVIPRLLGLKDE) (removed in mature form; occupies the channel of the substrate amino acid from the outside of the protein to the interior flavin ring in the precursor). FAD is bound by residues Gly2, Gly68, and 95-96 (EA). The propeptide at 108–109 (IK) is linker peptide. Residues Arg120, 141–144 (GAMR), and Val375 each bind FAD. Arg144 serves as a coordination point for substrate. Tyr537 contributes to the substrate binding site. FAD-binding positions include 652-653 (SD) and 660-662 (GWL). Gly660 lines the substrate pocket.

It belongs to the phenylalanine 2-monooxygenase family. In terms of assembly, heterotetramer composed of 2 alpha and 2 beta subunits. Requires FAD as cofactor. Proteolytically cleaved to yield the active enzyme. Cleavage of the linkage between the 2 subunits causes reshaping of the oxygen channel and the hydrophobic environment around the flavin ring. Removal of the prosequence causes opening of the amino acid channel.

It catalyses the reaction L-phenylalanine + O2 = 2-phenylacetamide + CO2 + H2O. Its function is as follows. Catalyzes both oxygenative decarboxylation and oxidative deamination, depending on the substrate used. Has high activity for L-Phe and L-Tyr, but relatively low activities for L-Met and L-Trp. L-Phe is mainly oxygenated and L-Met is mainly oxidized. The protein is Phenylalanine 2-monooxygenase precursor of Pseudomonas sp.